We begin with the raw amino-acid sequence, 155 residues long: Ribosome maturation factor RimP (155 aa).

Belongs to the RimP family.

Its subcellular location is the cytoplasm. In terms of biological role, required for maturation of 30S ribosomal subunits. In Listeria welshimeri serovar 6b (strain ATCC 35897 / DSM 20650 / CCUG 15529 / CIP 8149 / NCTC 11857 / SLCC 5334 / V8), this protein is Ribosome maturation factor RimP.